The chain runs to 399 residues: Vitamin K-dependent protein Z (399 aa).

The N-terminal stretch at 1 to 22 is a signal peptide; that stretch reads MAGCILLLRGFILTLILHQVEL. A propeptide spanning residues 23-40 is cleaved from the precursor; that stretch reads SVFLPAPKANNVLRRWRR. In terms of domain architecture, Gla spans 41–86; it reads GSSYFLEEIFQGNLEKECYEEVCNYEEAREVFENDVITDEFWRQYG. 4-carboxyglutamate is present on residues Glu-47, Glu-48, Glu-55, Glu-57, Glu-60, Glu-61, Glu-66, Glu-67, Glu-70, Glu-73, and Glu-80. An intrachain disulfide couples Cys-58 to Cys-63. EGF-like domains follow at residues 87–123 and 125–166; these read GGSP…KTCA and AKNE…KSCG. Intrachain disulfides connect Cys-91/Cys-102, Cys-96/Cys-111, Cys-113/Cys-122, Cys-129/Cys-141, Cys-137/Cys-150, Cys-152/Cys-165, and Cys-208/Cys-224. A glycan (N-linked (GlcNAc...) asparagine) is linked at Asn-99. Position 104 is a (3R)-3-hydroxyaspartate (Asp-104). One can recognise a Peptidase S1 domain in the interval 172 to 399; that stretch reads ACGALTSEHI…YSMWFKQIMK (228 aa). 3 N-linked (GlcNAc...) asparagine glycosylation sites follow: Asn-230, Asn-305, and Asn-331. A disulfide bond links Cys-326 and Cys-340.

Belongs to the peptidase S1 family. In terms of processing, the iron and 2-oxoglutarate dependent 3-hydroxylation of aspartate and asparagine is (R) stereospecific within EGF domains. In terms of tissue distribution, plasma.

It localises to the secreted. In terms of biological role, appears to assist hemostasis by binding thrombin and promoting its association with phospholipid vesicles. Inhibits activity of the coagulation protease factor Xa in the presence of SERPINA10, calcium and phospholipids. The polypeptide is Vitamin K-dependent protein Z (Proz) (Mus musculus (Mouse)).